We begin with the raw amino-acid sequence, 292 residues long: Acetylglutamate kinase (292 aa).

Residues 64–65 (GG), Arg-86, and Asn-190 contribute to the substrate site.

Belongs to the acetylglutamate kinase family. ArgB subfamily.

Its subcellular location is the cytoplasm. It catalyses the reaction N-acetyl-L-glutamate + ATP = N-acetyl-L-glutamyl 5-phosphate + ADP. It functions in the pathway amino-acid biosynthesis; L-arginine biosynthesis; N(2)-acetyl-L-ornithine from L-glutamate: step 2/4. Catalyzes the ATP-dependent phosphorylation of N-acetyl-L-glutamate. This chain is Acetylglutamate kinase, found in Geobacter metallireducens (strain ATCC 53774 / DSM 7210 / GS-15).